Here is a 642-residue protein sequence, read N- to C-terminus: DNA gyrase subunit B (642 aa).

The region spanning 422–536 (CELFIVEGDS…AGYVYIAQPP (115 aa)) is the Toprim domain. The Mg(2+) site is built by E428, D501, and D503.

Belongs to the type II topoisomerase family. Heterotetramer, composed of two GyrA and two GyrB chains. Within the heterotetramer, GyrA contains the active site tyrosine that forms a covalent intermediate with the DNA, while GyrB contributes the cofactor binding sites and catalyzes ATP hydrolysis. Mg(2+) serves as cofactor. It depends on Mn(2+) as a cofactor. The cofactor is Ca(2+).

Its subcellular location is the cytoplasm. The enzyme catalyses ATP-dependent breakage, passage and rejoining of double-stranded DNA.. Its activity is regulated as follows. Pyrrolopyrimidines inhibit both GyrB and its paralog in topoisomerase IV (parE). Its function is as follows. DNA gyrase negatively supercoils closed circular double-stranded DNA in an ATP-dependent manner and also catalyzes the interconversion of other topological isomers of double-stranded DNA rings, including catenanes and knotted rings. This is DNA gyrase subunit B from Enterococcus faecalis (strain ATCC 700802 / V583).